Reading from the N-terminus, the 96-residue chain is Integration host factor subunit beta (96 aa).

Positions 59-78 (RVGRNPKTGETVSLPGKYVP) are disordered.

The protein belongs to the bacterial histone-like protein family. Heterodimer of an alpha and a beta chain.

Functionally, this protein is one of the two subunits of integration host factor, a specific DNA-binding protein that functions in genetic recombination as well as in transcriptional and translational control. This chain is Integration host factor subunit beta, found in Thioalkalivibrio sulfidiphilus (strain HL-EbGR7).